An 859-amino-acid chain; its full sequence is Mycobactin import ATP-binding/permease protein IrtA (859 aa).

The Cytoplasmic segment spans residues 1-292 (MARGLQGVML…SRLLAPLKLP (292 aa)). Positions 15 to 122 (ARDHTATVIE…MSLMGSSRFD (108 aa)) constitute an FAD-binding FR-type domain. FAD is bound by residues 70–73 (RAYT), 87–91 (DVVLH), and 97–98 (AS). The disordered stretch occupies residues 247–267 (HRATEPAATEPEVGAAPQPES). Residues 293-313 (LVLSGVLAALVTLAQLAPFVL) traverse the membrane as a helical segment. In terms of domain architecture, ABC transmembrane type-1 spans 293–575 (LVLSGVLAAL…IAYGLGGLRT (283 aa)). At 314–334 (LVELSRLLVSGAGAHRLFTVG) the chain is on the periplasmic side. Residues 335 to 355 (FAAVGLLGTGALLAAALTLWL) traverse the membrane as a helical segment. At 356 to 408 (HVIDARFARALRLRLLSKLSRLPLGWFTSRGSGSIKKLVTDDTLALHYLVTHA) the chain is on the cytoplasmic side. Residues 409-429 (VPDAVAAVVAPVGVLVYLFVV) form a helical membrane-spanning segment. The Periplasmic portion of the chain corresponds to 430-432 (DWR). The helical transmembrane segment at 433 to 453 (VALVLFGPVLVYLTITSSLTI) threads the bilayer. The Cytoplasmic segment spans residues 454–519 (QSGPRIVQAQ…PLAGKKTLMD (66 aa)). The helical transmembrane segment at 520–540 (LATRPATFLWLIAATGTLLVA) threads the bilayer. At 541–548 (THRMDPVN) the chain is on the periplasmic side. Residues 549-569 (LLPFMFLGTTFGARLLGIAYG) form a helical membrane-spanning segment. The Cytoplasmic portion of the chain corresponds to 570 to 859 (LGGLRTGLLA…AVAAAQDGTR (290 aa)). The region spanning 610 to 843 (VVFDHVTFGY…GGRYCRLWDT (234 aa)) is the ABC transporter domain. 643-650 (GPSGSGKS) contacts ATP.

The protein belongs to the ABC transporter superfamily. Siderophore-Fe(3+) uptake transporter (SIUT) (TC 3.A.1.21) family. In terms of assembly, forms a heterodimer with IrtB. FAD is required as a cofactor.

The protein localises to the cell inner membrane. In terms of biological role, part of the ABC transporter complex IrtAB involved in the import of iron-bound mycobactin (Fe-MBT) and carboxymycobactin (Fe-cMBT). Mycobactins are then reduced by the siderophore interaction domain to facilitate iron release in the bacterial cell. Transmembrane domains (TMD) form a pore in the membrane and the ATP-binding domain (NBD) is responsible for energy generation. Required for replication in human macrophages and in mouse lungs. The polypeptide is Mycobactin import ATP-binding/permease protein IrtA (irtA) (Mycobacterium tuberculosis (strain ATCC 25618 / H37Rv)).